A 126-amino-acid chain; its full sequence is Protein ApaG (126 aa).

In terms of domain architecture, ApaG spans 2–126; sequence SQVESPIKIK…FRLAVPGIFQ (125 aa).

This is Protein ApaG from Shewanella frigidimarina (strain NCIMB 400).